Consider the following 783-residue polypeptide: E3 UFM1-protein ligase 1 homolog (783 aa).

Residues 404-482 (SNSSANFDAD…AGSSRKSVKP (79 aa)) form a disordered region. The span at 445–457 (KSTKKHQRGRAAA) shows a compositional bias: basic residues.

It belongs to the UFL1 family.

Functionally, E3 UFM1-protein ligase that mediates ufmylation of target proteins. This Drosophila mojavensis (Fruit fly) protein is E3 UFM1-protein ligase 1 homolog.